We begin with the raw amino-acid sequence, 140 residues long: Large ribosomal subunit protein uL11 (140 aa).

This sequence belongs to the universal ribosomal protein uL11 family. As to quaternary structure, part of the ribosomal stalk of the 50S ribosomal subunit. Interacts with L10 and the large rRNA to form the base of the stalk. L10 forms an elongated spine to which L12 dimers bind in a sequential fashion forming a multimeric L10(L12)X complex. In terms of processing, one or more lysine residues are methylated.

Functionally, forms part of the ribosomal stalk which helps the ribosome interact with GTP-bound translation factors. The chain is Large ribosomal subunit protein uL11 from Enterococcus faecalis (strain ATCC 700802 / V583).